Here is a 202-residue protein sequence, read N- to C-terminus: Na(+)-translocating NADH-quinone reductase subunit E (202 aa).

The next 6 membrane-spanning stretches (helical) occupy residues 5 to 25, 35 to 55, 81 to 101, 114 to 134, 144 to 164, and 180 to 200; these read VSLF…FLGM, VSTA…TVPL, FLGL…LEMF, GVFL…LFMV, VVYG…LAGI, and LGIT…FGGM.

Belongs to the NqrDE/RnfAE family. As to quaternary structure, composed of six subunits; NqrA, NqrB, NqrC, NqrD, NqrE and NqrF.

The protein localises to the cell inner membrane. It catalyses the reaction a ubiquinone + n Na(+)(in) + NADH + H(+) = a ubiquinol + n Na(+)(out) + NAD(+). Its function is as follows. NQR complex catalyzes the reduction of ubiquinone-1 to ubiquinol by two successive reactions, coupled with the transport of Na(+) ions from the cytoplasm to the periplasm. NqrA to NqrE are probably involved in the second step, the conversion of ubisemiquinone to ubiquinol. This Psychrobacter arcticus (strain DSM 17307 / VKM B-2377 / 273-4) protein is Na(+)-translocating NADH-quinone reductase subunit E.